The chain runs to 119 residues: MAEADDGGNGDGATAGDCYAHHHYRDVKLARDASENIDSISSLPDVILQQILSSLPTNLAIRTSVLSTRWRHVWSDTPYIYFDGPGTLYRGLKADTINKTLARYKLPKIMSFHLYTKIF.

The region spanning 37–92 (IDSISSLPDVILQQILSSLPTNLAIRTSVLSTRWRHVWSDTPYIYFDGPGTLYRGL) is the F-box domain.

The polypeptide is Putative F-box protein At2g39415 (Arabidopsis thaliana (Mouse-ear cress)).